The chain runs to 195 residues: ATP-dependent Clp protease proteolytic subunit (195 aa).

The active-site Nucleophile is Ser98. His123 is an active-site residue.

The protein belongs to the peptidase S14 family. In terms of assembly, fourteen ClpP subunits assemble into 2 heptameric rings which stack back to back to give a disk-like structure with a central cavity, resembling the structure of eukaryotic proteasomes.

Its subcellular location is the cytoplasm. It catalyses the reaction Hydrolysis of proteins to small peptides in the presence of ATP and magnesium. alpha-casein is the usual test substrate. In the absence of ATP, only oligopeptides shorter than five residues are hydrolyzed (such as succinyl-Leu-Tyr-|-NHMec, and Leu-Tyr-Leu-|-Tyr-Trp, in which cleavage of the -Tyr-|-Leu- and -Tyr-|-Trp bonds also occurs).. Functionally, cleaves peptides in various proteins in a process that requires ATP hydrolysis. Has a chymotrypsin-like activity. Plays a major role in the degradation of misfolded proteins. This is ATP-dependent Clp protease proteolytic subunit from Sulfurovum sp. (strain NBC37-1).